The chain runs to 699 residues: Kinesin-II 85 kDa subunit (699 aa).

One can recognise a Kinesin motor domain in the interval 10-342 (NVRVVVRCRP…LRYANRAKNI (333 aa)). 97 to 104 (GQTGTGKT) serves as a coordination point for ATP. Residues 341 to 619 (NIKNKAKINE…EDIGEWQLKC (279 aa)) adopt a coiled-coil conformation. 3 disordered regions span residues 369–415 (KQIS…LSPE), 432–456 (EEKK…ESEL), and 660–699 (GMKY…ALLQ). Positions 376-395 (EGLDDDEESGSEESGDEEAG) are enriched in acidic residues. Basic residues predominate over residues 400–411 (KKKRKGKNPKRK). The segment at 620 to 699 (VAYTGNNMRK…MASSIDALLQ (80 aa)) is globular. The segment covering 667–679 (QGKSGRPKTSSGR) has biased composition (polar residues).

Belongs to the TRAFAC class myosin-kinesin ATPase superfamily. Kinesin family. Kinesin II subfamily. As to quaternary structure, heterotrimer of a 115 kDa subunit (KAP115) and two kinesin-like subunits of 95 kDa (KRP95) and 85 kDa (KRP85). Post-translationally, the N-terminus is blocked.

The protein resides in the cytoplasm. The protein localises to the cytoskeleton. This chain is Kinesin-II 85 kDa subunit (KRP85), found in Strongylocentrotus purpuratus (Purple sea urchin).